We begin with the raw amino-acid sequence, 218 residues long: Small ribosomal subunit protein uS3c (218 aa).

Positions 39-120 constitute a KH type-2 domain; it reads IRNFMNKELL…IITCKVVGVT (82 aa).

It belongs to the universal ribosomal protein uS3 family. As to quaternary structure, part of the 30S ribosomal subunit.

The protein localises to the plastid. The protein resides in the chloroplast. The chain is Small ribosomal subunit protein uS3c (rps3) from Euglena gracilis.